Consider the following 490-residue polypeptide: Cysteine--tRNA ligase (490 aa).

A Zn(2+)-binding site is contributed by Cys31. Positions 33–43 (PTVYGDAHLGH) match the 'HIGH' region motif. Cys226, His251, and Glu255 together coordinate Zn(2+). The 'KMSKS' region signature appears at 283–287 (KMGKS). An ATP-binding site is contributed by Lys286.

The protein belongs to the class-I aminoacyl-tRNA synthetase family. In terms of assembly, monomer. Zn(2+) serves as cofactor.

The protein resides in the cytoplasm. It catalyses the reaction tRNA(Cys) + L-cysteine + ATP = L-cysteinyl-tRNA(Cys) + AMP + diphosphate. This Porphyromonas gingivalis (strain ATCC BAA-308 / W83) protein is Cysteine--tRNA ligase.